Consider the following 505-residue polypeptide: Maturase K (505 aa).

Belongs to the intron maturase 2 family. MatK subfamily.

The protein resides in the plastid. It is found in the chloroplast. Usually encoded in the trnK tRNA gene intron. Probably assists in splicing its own and other chloroplast group II introns. This Gomphrena pulchella (Globe amaranth) protein is Maturase K.